The chain runs to 154 residues: Large ribosomal subunit protein uL15 (154 aa).

A disordered region spans residues 1–54 (MKLHDLTPAPGSRKPKKRVGRGPGGTDKTAGRGHKGQKSRSGAGKGPFFEGGRS).

This sequence belongs to the universal ribosomal protein uL15 family. As to quaternary structure, part of the 50S ribosomal subunit.

Functionally, binds to the 23S rRNA. This Deinococcus geothermalis (strain DSM 11300 / CIP 105573 / AG-3a) protein is Large ribosomal subunit protein uL15.